Reading from the N-terminus, the 145-residue chain is D-aminoacyl-tRNA deacylase (145 aa).

The Gly-cisPro motif, important for rejection of L-amino acids signature appears at 137 to 138; that stretch reads GP.

The protein belongs to the DTD family. In terms of assembly, homodimer.

Its subcellular location is the cytoplasm. It catalyses the reaction glycyl-tRNA(Ala) + H2O = tRNA(Ala) + glycine + H(+). The enzyme catalyses a D-aminoacyl-tRNA + H2O = a tRNA + a D-alpha-amino acid + H(+). An aminoacyl-tRNA editing enzyme that deacylates mischarged D-aminoacyl-tRNAs. Also deacylates mischarged glycyl-tRNA(Ala), protecting cells against glycine mischarging by AlaRS. Acts via tRNA-based rather than protein-based catalysis; rejects L-amino acids rather than detecting D-amino acids in the active site. By recycling D-aminoacyl-tRNA to D-amino acids and free tRNA molecules, this enzyme counteracts the toxicity associated with the formation of D-aminoacyl-tRNA entities in vivo and helps enforce protein L-homochirality. This is D-aminoacyl-tRNA deacylase from Dinoroseobacter shibae (strain DSM 16493 / NCIMB 14021 / DFL 12).